The following is a 952-amino-acid chain: Meiotic coiled-coil protein 3 (952 aa).

Coiled coils occupy residues 283–611 (QLLQ…KEHL), 684–716 (TKKFVQKDQEYQTKEIELRNYKITLQSLLEDKL), and 839–942 (SLEN…RERE).

It localises to the cytoplasm. Functionally, has a role in meiosis. This is Meiotic coiled-coil protein 3 (mcp3) from Schizosaccharomyces pombe (strain 972 / ATCC 24843) (Fission yeast).